A 130-amino-acid polypeptide reads, in one-letter code: Small ribosomal subunit protein uS9 (130 aa).

This sequence belongs to the universal ribosomal protein uS9 family.

The chain is Small ribosomal subunit protein uS9 from Thiobacillus denitrificans (strain ATCC 25259 / T1).